The sequence spans 383 residues: N-acetyldiaminopimelate deacetylase (383 aa).

Aspartate 72 is an active-site residue. Glutamate 131 (proton acceptor) is an active-site residue.

It belongs to the peptidase M20A family. N-acetyldiaminopimelate deacetylase subfamily.

It catalyses the reaction N-acetyl-(2S,6S)-2,6-diaminopimelate + H2O = (2S,6S)-2,6-diaminopimelate + acetate. It functions in the pathway amino-acid biosynthesis; L-lysine biosynthesis via DAP pathway; LL-2,6-diaminopimelate from (S)-tetrahydrodipicolinate (acetylase route): step 3/3. Catalyzes the conversion of N-acetyl-diaminopimelate to diaminopimelate and acetate. The sequence is that of N-acetyldiaminopimelate deacetylase from Lacticaseibacillus casei (strain BL23) (Lactobacillus casei).